The chain runs to 243 residues: Carboxy-S-adenosyl-L-methionine synthase (243 aa).

S-adenosyl-L-methionine contacts are provided by residues Tyr-39, 64 to 66 (GCS), Asn-132, and Arg-199.

The protein belongs to the class I-like SAM-binding methyltransferase superfamily. Cx-SAM synthase family. As to quaternary structure, homodimer.

The catalysed reaction is prephenate + S-adenosyl-L-methionine = carboxy-S-adenosyl-L-methionine + 3-phenylpyruvate + H2O. Functionally, catalyzes the conversion of S-adenosyl-L-methionine (SAM) to carboxy-S-adenosyl-L-methionine (Cx-SAM). The chain is Carboxy-S-adenosyl-L-methionine synthase from Alteromonas mediterranea (strain DSM 17117 / CIP 110805 / LMG 28347 / Deep ecotype).